The primary structure comprises 85 residues: Small ribosomal subunit protein uS17 (85 aa).

It belongs to the universal ribosomal protein uS17 family. As to quaternary structure, part of the 30S ribosomal subunit.

Functionally, one of the primary rRNA binding proteins, it binds specifically to the 5'-end of 16S ribosomal RNA. This is Small ribosomal subunit protein uS17 from Desulforapulum autotrophicum (strain ATCC 43914 / DSM 3382 / VKM B-1955 / HRM2) (Desulfobacterium autotrophicum).